Consider the following 571-residue polypeptide: MRTSQYLFSTLKETPNDAQVVSHQLMLRAGMIRPMASGLYNWLPTGIKVLKKVENIIREEMNKGGAIEVLMPVVQPAELWQESGRWNDYGAELLRFVDRGSRDFVLGPTHEEVITDLVRREVSSYKQLPLNLYQTQTKFRDEVRPRFGVMRSREFVMKDAYSFHVDKASLQETYDVMYQVYSNIFTRLGLDFRAVQADTGSIGGSASHEFQVLASSGEDDVVFSTESDFAANIELAEAVAVGERQAPTAEMQLVDTPNAKTINELVEQFNLPIEKTVKTLIVKGATEEQSLVALVLRGDHELNEIKAQKHPLVADPLEFADEAEIKAKIGAGVGSLGVINLNVPAIIDRSVAVMSDFGCGANIDGKHYFNVNWERDVAMPEVADLRNVVEGDPSPDGKGVLQIKRGIEVGHIFQLGTKYSEAMKATVQGEDGKPLVMTMGCYGIGVTRVVAAAIEQHHDERGIIWPSDEIAPFTVAIVPMNMHKSESVQQFSEELYRTLKAQGVDVIFDDRKERPGVMFADMELIGVPHMVVIGEKNLANGEIEYKNRRTGEKQMIAKDQLLAFLKENVKA.

The protein belongs to the class-II aminoacyl-tRNA synthetase family. ProS type 1 subfamily. In terms of assembly, homodimer.

The protein localises to the cytoplasm. It carries out the reaction tRNA(Pro) + L-proline + ATP = L-prolyl-tRNA(Pro) + AMP + diphosphate. In terms of biological role, catalyzes the attachment of proline to tRNA(Pro) in a two-step reaction: proline is first activated by ATP to form Pro-AMP and then transferred to the acceptor end of tRNA(Pro). As ProRS can inadvertently accommodate and process non-cognate amino acids such as alanine and cysteine, to avoid such errors it has two additional distinct editing activities against alanine. One activity is designated as 'pretransfer' editing and involves the tRNA(Pro)-independent hydrolysis of activated Ala-AMP. The other activity is designated 'posttransfer' editing and involves deacylation of mischarged Ala-tRNA(Pro). The misacylated Cys-tRNA(Pro) is not edited by ProRS. In Actinobacillus pleuropneumoniae serotype 3 (strain JL03), this protein is Proline--tRNA ligase.